Consider the following 508-residue polypeptide: MSGLCACTLVGAAQVQQLEAALFAAGMPVEALMEKAGLRLAAAIAADYPAGGYPRVGVLVGPGHNGGDALVVARELWLVGRSVQVFCPRPPIKPLARAHLDYFQSLGGRVHTGAVPEEPGVDLWVDGLFGFGLERPVAEPYAGLMAQVNASGVPVAAVDLPSGLSSETGEALGGLAVRAARTYCLGLWKRGLWQDAALDWLGVPVRLEIGFSEAQVRSVLGEDHRSARLLLPDAARAGLPLARPATAHKYSVGTLLAVAGSRQYGGAATLVALGARSGGPGMLYLALPESLADRVAARLPEAIVHPCPQAENGALADLPGVDLEKFDAVVCGPGLGKAEQALVLRLAREAAGALVLDADGLNLIAGQLEVLAQRAAPTVLTPHPGEFKRLFPDIALADRQGAARTAALRSHAWIVLKGARTVVASPSGQVWVNPGGSPALARGGSGDVLAGLLGALLAQCENPEPAVLGAVWWHAAAGEWLAARHTVLGVDAETLALGLLPFLAADGP.

The NAD(P)H-hydrate epimerase stretch occupies residues methionine 1–histidine 224. One can recognise a YjeF N-terminal domain in the interval valine 15–arginine 217. The NADPHX 1; for epimerase activity stretch occupies residues histidine 64–aspartate 68. Asparagine 65 and aspartate 126 together coordinate K(+). An NADPHX 1; for epimerase activity region spans residues glycine 130–proline 136. Tyrosine 141 and aspartate 159 together coordinate (6S)-NADPHX. Serine 162 provides a ligand contact to K(+). The 275-residue stretch at proline 232–aspartate 506 folds into the YjeF C-terminal domain. An ADP-dependent (S)-NAD(P)H-hydrate dehydratase region spans residues proline 232–proline 508. Position 334 (glycine 334) interacts with (6S)-NADPHX. The interval histidine 383 to arginine 389 is NADPHX 2; for dehydratase activity. ADP contacts are provided by residues lysine 417 to threonine 421 and serine 437 to glycine 446. Residue aspartate 447 coordinates (6S)-NADPHX.

In the N-terminal section; belongs to the NnrE/AIBP family. This sequence in the C-terminal section; belongs to the NnrD/CARKD family. K(+) is required as a cofactor.

The catalysed reaction is (6S)-NADHX + ADP = AMP + phosphate + NADH + H(+). It catalyses the reaction (6S)-NADPHX + ADP = AMP + phosphate + NADPH + H(+). The enzyme catalyses (6R)-NADHX = (6S)-NADHX. It carries out the reaction (6R)-NADPHX = (6S)-NADPHX. Its function is as follows. Bifunctional enzyme that catalyzes the epimerization of the S- and R-forms of NAD(P)HX and the dehydration of the S-form of NAD(P)HX at the expense of ADP, which is converted to AMP. This allows the repair of both epimers of NAD(P)HX, a damaged form of NAD(P)H that is a result of enzymatic or heat-dependent hydration. The sequence is that of Bifunctional NAD(P)H-hydrate repair enzyme Nnr (nnr) from Gloeobacter violaceus (strain ATCC 29082 / PCC 7421).